The sequence spans 86 residues: SEED MATURATION PROTEIN 1 (86 aa).

The disordered stretch occupies residues 52–86 (RIEKGKEQSAASGDQTQIQRDIKDIKGTRTDDSPR). Positions 60-70 (SAASGDQTQIQ) are enriched in polar residues. Basic and acidic residues predominate over residues 71 to 86 (RDIKDIKGTRTDDSPR).

It belongs to the LEA type 3 family.

Protein chaperone involved in seed maturation and dormancy maintenance after high temperature fluctuation (e.g. secondary dormancy after 3 days at 40 degrees Celsius), probably by protecting heat labile proteins required for secondary dormancy (e.g. G6PDH, HOP3, SR45, ECP63, SCL33, RPL32B, ChlADR1, MSBP1, MBF1B, At3g01690, At1g15280, At1g15290, At2g31410, At1g11630, At1g65090, EMB2279, EMB1674 and RPL35C). In Arabidopsis thaliana (Mouse-ear cress), this protein is SEED MATURATION PROTEIN 1.